The following is a 152-amino-acid chain: Transcriptional regulator MraZ (152 aa).

2 SpoVT-AbrB domains span residues 5 to 52 (ATLV…PLPE) and 81 to 124 (ASEC…DEQT).

The protein belongs to the MraZ family. As to quaternary structure, forms oligomers.

Its subcellular location is the cytoplasm. It is found in the nucleoid. Its function is as follows. Negatively regulates its own expression and that of the subsequent genes in the proximal part of the division and cell wall (dcw) gene cluster. Acts by binding directly to DNA. May also regulate the expression of genes outside the dcw cluster. The protein is Transcriptional regulator MraZ of Erwinia tasmaniensis (strain DSM 17950 / CFBP 7177 / CIP 109463 / NCPPB 4357 / Et1/99).